The chain runs to 512 residues: Cytochrome P450 26B1 (512 aa).

A heme-binding site is contributed by Cys441.

This sequence belongs to the cytochrome P450 family. It depends on heme as a cofactor. As to expression, highly expressed in brain, particularly in the cerebellum and pons.

The protein resides in the endoplasmic reticulum membrane. Its subcellular location is the microsome membrane. The catalysed reaction is all-trans-retinoate + reduced [NADPH--hemoprotein reductase] + O2 = all-trans-4-hydroxyretinoate + oxidized [NADPH--hemoprotein reductase] + H2O + H(+). The enzyme catalyses all-trans-retinoate + reduced [NADPH--hemoprotein reductase] + O2 = all-trans-18-hydroxyretinoate + oxidized [NADPH--hemoprotein reductase] + H2O + H(+). Functionally, a cytochrome P450 monooxygenase involved in the metabolism of retinoates (RAs), the active metabolites of vitamin A, and critical signaling molecules in animals. RAs exist as at least four different isomers: all-trans-RA (atRA), 9-cis-RA, 13-cis-RA, and 9,13-dicis-RA, where atRA is considered to be the biologically active isomer, although 9-cis-RA and 13-cis-RA also have activity. Catalyzes the hydroxylation of atRA primarily at C-4 and C-18, thereby contributing to the regulation of atRA homeostasis and signaling. Hydroxylation of atRA limits its biological activity and initiates a degradative process leading to its eventual elimination. Involved in the convertion of atRA to all-trans-4-oxo-RA. Can oxidize all-trans-13,14-dihydroretinoate (DRA) to metabolites which could include all-trans-4-oxo-DRA, all-trans-4-hydroxy-DRA, all-trans-5,8-epoxy-DRA, and all-trans-18-hydroxy-DRA. Shows preference for the following substrates: atRA &gt; 9-cis-RA &gt; 13-cis-RA. Plays a central role in germ cell development: acts by degrading RAs in the developing testis, preventing STRA8 expression, thereby leading to delay of meiosis. Required for the maintenance of the undifferentiated state of male germ cells during embryonic development in Sertoli cells, inducing arrest in G0 phase of the cell cycle and preventing meiotic entry. Plays a role in skeletal development, both at the level of patterning and in the ossification of bone and the establishment of some synovial joints. Essential for postnatal survival. Its function is as follows. Also has a significant activity in oxidation of tazarotenic acid and may therefore metabolize that xenobiotic in vivo. This is Cytochrome P450 26B1 (CYP26B1) from Homo sapiens (Human).